Reading from the N-terminus, the 428-residue chain is Synaptotagmin-1 (428 aa).

The Vesicular portion of the chain corresponds to 1 to 67 (MDSLLARVKR…KDKLINEIEN (67 aa)). Positions 16-50 (ALNPAQEGVTGGPDAAGLPDVSTSSPGGGGAGDKL) are disordered. Residues 68 to 92 (LPIWAIVLIIAGSLLFLVCCVYCVC) traverse the membrane as a helical segment. Residues 93 to 428 (RRSCRKRKKK…HTLQEVPEKN (336 aa)) lie on the Cytoplasmic side of the membrane. Position 123 is a phosphoserine; by PRKC2 (Ser-123). The phospholipid binding stretch occupies residues 147-395 (STKSEVKLGK…PIGRCVLGCN (249 aa)). C2 domains are found at residues 153–272 (KLGK…EDWK) and 286–419 (KLGD…AQWH). Ca(2+) is bound by residues Asp-184, Asp-190, Asp-242, Phe-243, Asp-244, Ser-247, Lys-248, Asp-250, Asp-317, Asp-323, Asp-377, and Asp-379.

This sequence belongs to the synaptotagmin family. Binds SNAP25. Isoform 3 binds SNAP25 with higher affinity. It depends on Ca(2+) as a cofactor.

It localises to the cytoplasmic vesicle. The protein resides in the secretory vesicle. The protein localises to the synaptic vesicle membrane. It is found in the synapse. Acts as inhibitor of neurotransmitter release. Overexpression leads to a decrease in the amplitude of the excitatory postsynaptic potential in dissected cholinergic and glutaminergic neurons while depletion with antisense oligonucleotides leads to an increase. Overexpression of isoform 1 blocks the reversal of synaptic depression by serotonin in sensory neurons. The protein is Synaptotagmin-1 (SYT1) of Aplysia californica (California sea hare).